Reading from the N-terminus, the 325-residue chain is Diacylglycerol acyltransferase/mycolyltransferase Ag85B (325 aa).

The signal sequence occupies residues Met1–Ala40. Residue Leu82–Arg83 coordinates substrate. The fibronectin-binding stretch occupies residues Phe98–Val108. Residues Cys127 and Cys132 are joined by a disulfide bond. Positions 166 and 194 each coordinate substrate. Catalysis depends on Ser166, which acts as the Nucleophile. The active site involves Glu270. Substrate is bound by residues Phe272–Ser275, Lys279, and His302–Trp304. His302 is a catalytic residue.

It belongs to the mycobacterial A85 antigen family.

The protein resides in the secreted. The enzyme catalyses 2 alpha,alpha'-trehalose 6-mycolate = alpha,alpha'-trehalose 6,6'-bismycolate + alpha,alpha-trehalose. The catalysed reaction is an acyl-CoA + a 1,2-diacyl-sn-glycerol = a triacyl-sn-glycerol + CoA. In terms of biological role, the antigen 85 proteins (FbpA, FbpB, FbpC) are responsible for the high affinity of mycobacteria for fibronectin, a large adhesive glycoprotein, which facilitates the attachment of M.tuberculosis to murine alveolar macrophages (AMs). They also help to maintain the integrity of the cell wall by catalyzing the transfer of mycolic acids to cell wall arabinogalactan and through the synthesis of alpha,alpha-trehalose dimycolate (TDM, cord factor). They catalyze the transfer of a mycoloyl residue from one molecule of alpha,alpha-trehalose monomycolate (TMM) to another TMM, leading to the formation of TDM. The protein is Diacylglycerol acyltransferase/mycolyltransferase Ag85B (fbpB) of Mycobacterium kansasii.